The primary structure comprises 843 residues: Translation initiation factor IF-2 (843 aa).

Disordered stretches follow at residues 50 to 72 and 94 to 260; these read LKSSHKSKAEEPRKITLQRKTTS and QRSP…TGPV. Residues 96–135 show a composition bias toward basic and acidic residues; it reads SPEEIQAEQKREQDERRAAENAARDKVDADVRQRNEEQAR. The span at 139–173 shows a compositional bias: low complexity; that stretch reads TATAAAAPAAKAEPAPAAAAPAPAPVVADAPASED. Composition is skewed to basic and acidic residues over residues 174–203 and 227–236; these read AAARAAERKKDETRRNESRTRDDDRRRGEA and TTDEESDGAR. Over residues 237–250 the composition is skewed to basic residues; it reads RGRGGKGKLKKRNQ. Residues 343–516 enclose the tr-type G domain; sequence SRAPVVTVMG…EVLELTATPT (174 aa). The G1 stretch occupies residues 352–359; it reads GHVDHGKT. 352-359 provides a ligand contact to GTP; it reads GHVDHGKT. The interval 377–381 is G2; sequence GITQH. Residues 398–401 are G3; sequence DTPG. GTP-binding positions include 398 to 402 and 452 to 455; these read DTPGH and NKID. Positions 452-455 are G4; that stretch reads NKID. The G5 stretch occupies residues 488-490; that stretch reads SAK.

Belongs to the TRAFAC class translation factor GTPase superfamily. Classic translation factor GTPase family. IF-2 subfamily.

It is found in the cytoplasm. Its function is as follows. One of the essential components for the initiation of protein synthesis. Protects formylmethionyl-tRNA from spontaneous hydrolysis and promotes its binding to the 30S ribosomal subunits. Also involved in the hydrolysis of GTP during the formation of the 70S ribosomal complex. The sequence is that of Translation initiation factor IF-2 from Pseudomonas putida (strain W619).